Reading from the N-terminus, the 270-residue chain is MPELPEVETTRRGIAPHLEGQRVSRVIVRDGRLRWPVPEDLDIRLSGQRIVQVSRRAKYLLIQAEVGTLISHLGMSGNLRLVEAGLAALKHEHVDIELESGLALRYTDPRRFGAMLWSHDPHNHELLIRLGPEPLTDLFDGERLYERSRGKSIAVKPFIMDNAVVVGVGNIYATEALFAAGIDPRREARGISRARYLKLAIEIKRILAYAIERGGTTLRDFIGGDGKPGYFQQELFAYGRGGQPCKVCGTTLREIKLGQRASVYCPKCQR.

The active-site Schiff-base intermediate with DNA is the Pro2. Glu3 acts as the Proton donor in catalysis. The active-site Proton donor; for beta-elimination activity is Lys58. His91, Arg110, and Lys151 together coordinate DNA. The FPG-type zinc finger occupies 236–270 (FAYGRGGQPCKVCGTTLREIKLGQRASVYCPKCQR). Arg260 acts as the Proton donor; for delta-elimination activity in catalysis.

It belongs to the FPG family. As to quaternary structure, monomer. The cofactor is Zn(2+).

The catalysed reaction is Hydrolysis of DNA containing ring-opened 7-methylguanine residues, releasing 2,6-diamino-4-hydroxy-5-(N-methyl)formamidopyrimidine.. It catalyses the reaction 2'-deoxyribonucleotide-(2'-deoxyribose 5'-phosphate)-2'-deoxyribonucleotide-DNA = a 3'-end 2'-deoxyribonucleotide-(2,3-dehydro-2,3-deoxyribose 5'-phosphate)-DNA + a 5'-end 5'-phospho-2'-deoxyribonucleoside-DNA + H(+). Involved in base excision repair of DNA damaged by oxidation or by mutagenic agents. Acts as a DNA glycosylase that recognizes and removes damaged bases. Has a preference for oxidized purines, such as 7,8-dihydro-8-oxoguanine (8-oxoG). Has AP (apurinic/apyrimidinic) lyase activity and introduces nicks in the DNA strand. Cleaves the DNA backbone by beta-delta elimination to generate a single-strand break at the site of the removed base with both 3'- and 5'-phosphates. This Pseudomonas syringae pv. tomato (strain ATCC BAA-871 / DC3000) protein is Formamidopyrimidine-DNA glycosylase.